Here is a 555-residue protein sequence, read N- to C-terminus: Glypican-6 (555 aa).

The N-terminal stretch at 1–23 is a signal peptide; that stretch reads MPSWIRAVILPLSGLLLTLPAAA. The segment covering 348 to 357 has biased composition (low complexity); the sequence is PALRSARSAP. Disordered stretches follow at residues 348 to 376 and 480 to 501; these read PALR…PTTA and GNDV…GSGC. A lipid anchor (GPI-anchor amidated serine) is attached at serine 530. The propeptide at 531–555 is removed in mature form; that stretch reads ASKFSSSLISWSLVCMVLALQRLYR.

It belongs to the glypican family. As to expression, in the cartilage growth-plate, gradient of expression with highest levels from the proliferative and pre-hypertrophic zones to lowest, if any, in the hypertrophic zones (at protein level).

It localises to the cell membrane. The protein localises to the secreted. It is found in the extracellular space. Cell surface proteoglycan that bears heparan sulfate. Putative cell surface coreceptor for growth factors, extracellular matrix proteins, proteases and anti-proteases. Enhances migration and invasion of cancer cells through WNT5A signaling. This Mus musculus (Mouse) protein is Glypican-6 (Gpc6).